The sequence spans 227 residues: Ribonuclease HII (227 aa).

The RNase H type-2 domain maps to 16 to 205; sequence SLLAGVDEVG…VKMALDAVGV (190 aa). The a divalent metal cation site is built by aspartate 22, glutamate 23, and aspartate 114.

It belongs to the RNase HII family. The cofactor is Mn(2+). Requires Mg(2+) as cofactor.

It is found in the cytoplasm. It catalyses the reaction Endonucleolytic cleavage to 5'-phosphomonoester.. In terms of biological role, endonuclease that specifically degrades the RNA of RNA-DNA hybrids. The polypeptide is Ribonuclease HII (Marinobacter nauticus (strain ATCC 700491 / DSM 11845 / VT8) (Marinobacter aquaeolei)).